A 177-amino-acid chain; its full sequence is Nucleoside triphosphate/diphosphate phosphatase (177 aa).

The Proton donor role is filled by arginine 23. Asparagine 87, aspartate 103, aspartate 105, aspartate 107, aspartate 120, and glutamate 123 together coordinate Mg(2+).

This sequence belongs to the Ntdp family. The cofactor is Mg(2+).

It catalyses the reaction a ribonucleoside 5'-triphosphate + H2O = a ribonucleoside 5'-diphosphate + phosphate + H(+). The enzyme catalyses a ribonucleoside 5'-diphosphate + H2O = a ribonucleoside 5'-phosphate + phosphate + H(+). Has nucleoside phosphatase activity towards nucleoside triphosphates and nucleoside diphosphates. This chain is Nucleoside triphosphate/diphosphate phosphatase, found in Streptococcus sanguinis (strain SK36).